The chain runs to 244 residues: Small ribosomal subunit protein eS4 (244 aa).

Residues 43–106 (LPLLLVVRDV…DETYLVLFDE (64 aa)) enclose the S4 RNA-binding domain.

It belongs to the eukaryotic ribosomal protein eS4 family.

The protein is Small ribosomal subunit protein eS4 of Methanococcus maripaludis (strain DSM 14266 / JCM 13030 / NBRC 101832 / S2 / LL).